We begin with the raw amino-acid sequence, 20 residues long: Outer membrane protein 40Va (20 aa).

The protein belongs to the Gram-negative porin family. As to quaternary structure, homotrimer.

Its subcellular location is the cell outer membrane. In terms of biological role, forms pores that allow passive diffusion of small molecules across the outer membrane. The protein is Outer membrane protein 40Va of Vibrio alginolyticus.